The chain runs to 383 residues: Nuclear hormone receptor family member nhr-217 (383 aa).

A DNA-binding region (nuclear receptor) is located at residues 53 to 127 (IPACPVCDVP…AGLQRDYVRQ (75 aa)). NR C4-type zinc fingers lie at residues 56–77 (CPVC…CAAC) and 93–109 (CKRE…CRAC). In terms of domain architecture, NR LBD spans 172-383 (ILKVSNSSLF…KLYVQIGIPF (212 aa)).

This sequence belongs to the nuclear hormone receptor family.

It localises to the nucleus. In terms of biological role, orphan nuclear receptor. This is Nuclear hormone receptor family member nhr-217 (nhr-217) from Caenorhabditis elegans.